The primary structure comprises 871 residues: Mitochondrial 15S rRNA processing factor CCM1 (871 aa).

A mitochondrion-targeting transit peptide spans 1–72 (MLGRRLAGAK…EFKLRQLREF (72 aa)). PPR repeat units lie at residues 333–369 (NKEN…DHKP) and 370–404 (DAKT…KVDP). Positions 704-724 (RPGSSTHLTHSEIKKQPSSQT) are disordered.

The protein belongs to the CCM1 family. As to quaternary structure, binds to mitochondrial small subunit 15S rRNA.

The protein resides in the mitochondrion. Its function is as follows. Regulates mitochondrial small subunit maturation by controlling 15S rRNA 5'-end processing. Localizes to the 5' precursor of the 15S rRNA in a position that is subsequently occupied by mS47 in the mature yeast mtSSU. Uses structure and sequence-specific RNA recognition, binding to a single-stranded region of the precursor and specifically recognizing bases -6 to -1. The exchange of Ccm1 for mS47 is coupled to the irreversible removal of precursor rRNA that is accompanied by conformational changes of the mitoribosomal proteins uS5m and mS26. These conformational changes signal completion of 5'-end rRNA processing through protection of the mature 5'-end of the 15S rRNA and stabilization of mS47. The removal of the 5' precursor together with the dissociation of Ccm1 may be catalyzed by the 5'-3' exoribonuclease Pet127. Involved in the specific removal of group I introns in mitochondrial encoded transcripts. This chain is Mitochondrial 15S rRNA processing factor CCM1 (CCM1), found in Lachancea thermotolerans (strain ATCC 56472 / CBS 6340 / NRRL Y-8284) (Yeast).